The following is a 262-amino-acid chain: Mitochondrial calcium uniporter regulator 1 (262 aa).

Residues 138-175 (EKSEFSALRTQNEKVKIELQQLKKQLNDSIVKVRASNK) adopt a coiled-coil conformation. The chain crosses the membrane as a helical span at residues 239–261 (TIKYLAGSVFTCLTIALGFYRLW).

This sequence belongs to the CCDC90 family.

The protein resides in the mitochondrion inner membrane. Key regulator of mitochondrial calcium uniporter (mcu) required for calcium entry into mitochondrion. The chain is Mitochondrial calcium uniporter regulator 1 from Xenopus tropicalis (Western clawed frog).